We begin with the raw amino-acid sequence, 168 residues long: Peroxynitrite isomerase (168 aa).

The GXWXGXG signature appears at 25–31; it reads GTWRGAG. Heme b is bound at residue H160.

The protein belongs to the nitrobindin family. Homodimer. Heme b serves as cofactor.

The catalysed reaction is peroxynitrite = nitrate. It participates in nitrogen metabolism. Functionally, heme-binding protein able to scavenge peroxynitrite and to protect free L-tyrosine against peroxynitrite-mediated nitration, by acting as a peroxynitrite isomerase that converts peroxynitrite to nitrate. Therefore, this protein likely plays a role in peroxynitrite sensing and in the detoxification of reactive nitrogen and oxygen species (RNS and ROS, respectively). Is able to bind nitric oxide (NO) in vitro, but may act as a sensor of peroxynitrite levels in vivo. This is Peroxynitrite isomerase from Nocardia farcinica (strain IFM 10152).